The sequence spans 464 residues: Argininosuccinate lyase (464 aa).

The protein belongs to the lyase 1 family. Argininosuccinate lyase subfamily.

It localises to the cytoplasm. It catalyses the reaction 2-(N(omega)-L-arginino)succinate = fumarate + L-arginine. Its pathway is amino-acid biosynthesis; L-arginine biosynthesis; L-arginine from L-ornithine and carbamoyl phosphate: step 3/3. The polypeptide is Argininosuccinate lyase (Frankia casuarinae (strain DSM 45818 / CECT 9043 / HFP020203 / CcI3)).